A 216-amino-acid polypeptide reads, in one-letter code: ACTLECEGKLPSAKAWGTCKELLQLTKLDGVQDGEKYQDNNDSHYIAKKYGGFMKRYGGFMKKMDELYHAEPEEDDAGGEILAKNYGGFMKKEYDSNRDASDLLRELLATSGDPESAIYHDNNSETPGEMNKRYGGFMRGYRRSTDLEDETRGIQKRYGGFMRRVGRPEWWQDYQKRYGGFMTRFTDSFLPSDEDGESYSKENPDMEKRYGGFMRF.

5 consecutive propeptides follow at residues 64 to 85 (MDEL…LAKN), 93 to 131 (EYDS…GEMN), 144 to 155 (STDLEDETRGIQ), 165 to 175 (VGRPEWWQDYQ), and 183 to 207 (TRFT…PDME). The tract at residues 114-133 (PESAIYHDNNSETPGEMNKR) is disordered.

Belongs to the opioid neuropeptide precursor family. Post-translationally, the N-terminal domain contains 6 conserved cysteines thought to be involved in disulfide bonding and/or processing.

It is found in the secreted. Functionally, enkephalin neuropeptides compete with and mimic the effects of opiate drugs. They play a role in a number of physiologic functions, including pain perception and responses to stress. The polypeptide is Proenkephalin-A-B (penk-b) (Xenopus laevis (African clawed frog)).